The primary structure comprises 486 residues: Ribosomal RNA small subunit methyltransferase F (486 aa).

S-adenosyl-L-methionine is bound by residues 124-130 (ASAPGSK), Glu-148, Asp-175, and Asp-193. The active-site Nucleophile is the Cys-246.

It belongs to the class I-like SAM-binding methyltransferase superfamily. RsmB/NOP family.

Its subcellular location is the cytoplasm. The enzyme catalyses cytidine(1407) in 16S rRNA + S-adenosyl-L-methionine = 5-methylcytidine(1407) in 16S rRNA + S-adenosyl-L-homocysteine + H(+). Its function is as follows. Specifically methylates the cytosine at position 1407 (m5C1407) of 16S rRNA. The protein is Ribosomal RNA small subunit methyltransferase F of Shewanella baltica (strain OS155 / ATCC BAA-1091).